The following is a 456-amino-acid chain: Adenylosuccinate synthetase isozyme 2 (456 aa).

Positions 1–14 are enriched in polar residues; the sequence is MSISESSPAATSLP. The interval 1 to 24 is disordered; the sequence is MSISESSPAATSLPNGDCGRPRAR. Residues 39-45 and 67-69 contribute to the GTP site; these read GDEGKGK and GHT. The active-site Proton acceptor is Asp-40. Positions 40 and 67 each coordinate Mg(2+). Asp-40 is a binding site for substrate. IMP contacts are provided by residues 40–43, 65–68, Thr-162, Arg-176, Asn-255, Thr-270, and Arg-334; these read DEGK and NAGH. The active-site Proton donor is His-68. Substrate is bound at residue 330-336; it reads VTTGRKR. Residues Arg-336, 362-364, and 444-447 each bind GTP; these read KLD and GVGK.

This sequence belongs to the adenylosuccinate synthetase family. In terms of assembly, homodimer. It depends on Mg(2+) as a cofactor.

It is found in the cytoplasm. The protein localises to the mitochondrion. It catalyses the reaction IMP + L-aspartate + GTP = N(6)-(1,2-dicarboxyethyl)-AMP + GDP + phosphate + 2 H(+). It functions in the pathway purine metabolism; AMP biosynthesis via de novo pathway; AMP from IMP: step 1/2. Its activity is regulated as follows. Inhibited competitively by AMP and IMP and non-competitively by fructose 1,6-bisphosphate. Plays an important role in the de novo pathway and in the salvage pathway of purine nucleotide biosynthesis. Catalyzes the first committed step in the biosynthesis of AMP from IMP. This chain is Adenylosuccinate synthetase isozyme 2 (Adss2), found in Mus musculus (Mouse).